An 829-amino-acid polypeptide reads, in one-letter code: Periplasmic nitrate reductase (829 aa).

Positions 1–31 (MKLSRRDFMKANAVAAAAAAAGLTIPTVARA) form a signal peptide, tat-type signal. Residues 40–96 (ITWDKAPCRFCGTGCGVLVGTQNGRIVASQGDPDAPVNRGLNCIKGYFLPKIMYGKD) enclose the 4Fe-4S Mo/W bis-MGD-type domain. 4 residues coordinate [4Fe-4S] cluster: Cys47, Cys50, Cys54, and Cys82. Residues Lys84, Gln151, Asn176, Cys180, 213–220 (WGSNMAEM), 263–265 (QSD), Met373, Gln377, Asn483, 509–510 (SD), Lys532, Asp559, and 719–728 (TGRVLEHWHT) each bind Mo-bis(molybdopterin guanine dinucleotide). Position 795 (Phe795) interacts with substrate. 2 residues coordinate Mo-bis(molybdopterin guanine dinucleotide): Asn803 and Lys820.

This sequence belongs to the prokaryotic molybdopterin-containing oxidoreductase family. NasA/NapA/NarB subfamily. Component of the periplasmic nitrate reductase NapAB complex composed of NapA and NapB. It depends on [4Fe-4S] cluster as a cofactor. Mo-bis(molybdopterin guanine dinucleotide) is required as a cofactor. Post-translationally, predicted to be exported by the Tat system. The position of the signal peptide cleavage has not been experimentally proven.

The protein localises to the periplasm. The enzyme catalyses 2 Fe(II)-[cytochrome] + nitrate + 2 H(+) = 2 Fe(III)-[cytochrome] + nitrite + H2O. Catalytic subunit of the periplasmic nitrate reductase complex NapAB. Receives electrons from NapB and catalyzes the reduction of nitrate to nitrite. The polypeptide is Periplasmic nitrate reductase (Edwardsiella ictaluri (strain 93-146)).